Here is a 414-residue protein sequence, read N- to C-terminus: MNVTVRFLRPFARYLVPYTFHRTRSNSYSRVLQRYVSSKVPSLPCHNKDSTSPPEQLELDGWKTTMKSSIQENGVSVVSDKDEDSLAATRELIEMWRLLGKEVPEHITEEELKTLMECASKSAKKKYLRYLYGKEMMKKAKQMKKEMKAAAREEAKRARSLEPSTGEEQRDFMFLRLWDRQTNIALGWKGVQAMQFGQPLVFDMAYDNYMKPSELQNTVSQLLESEGWNRRNVDPFHIYFCNLEVDGAYHRELVKRYGEKWDKLLLTATEKSPVDLFPKDSIIYLTADSPNVMTTFKHDKIYIIGSFVDKNTQTGTSLAKAKRQNLATECLPLDKYLQWDVGNKNLTLDQMIRILLCLKNTGNWEEALKFVPRRKHTGYLEVPEHSQAAFRKLKKTKTLNSFRKGSLNVHMWKR.

Residues 1–35 constitute a mitochondrion transit peptide; that stretch reads MNVTVRFLRPFARYLVPYTFHRTRSNSYSRVLQRY. Ser-79 bears the Phosphoserine mark. Residues 133 to 162 adopt a coiled-coil conformation; it reads GKEMMKKAKQMKKEMKAAAREEAKRARSLE. Residues 186–378 enclose the SAM-dependent MTase TRM10-type domain; sequence LGWKGVQAMQ…KFVPRRKHTG (193 aa).

It belongs to the class IV-like SAM-binding methyltransferase superfamily. TRM10 family. Component of mitochondrial ribonuclease P, a complex composed of TRMT10C/MRPP1, HSD17B10/MRPP2 and PRORP/MRPP3. Interacts with HSD17B10/MRPP2; forming the MRPP1-MRPP2 subcomplex of the mitochondrial ribonuclease P complex. Interacts with GRSF1.

The protein localises to the mitochondrion matrix. It localises to the mitochondrion nucleoid. It carries out the reaction adenosine(9) in tRNA + S-adenosyl-L-methionine = N(1)-methyladenosine(9) in tRNA + S-adenosyl-L-homocysteine + H(+). It catalyses the reaction guanosine(9) in tRNA + S-adenosyl-L-methionine = N(1)-methylguanosine(9) in tRNA + S-adenosyl-L-homocysteine + H(+). The catalysed reaction is an adenosine in mRNA + S-adenosyl-L-methionine = an N(1)-methyladenosine in mRNA + S-adenosyl-L-homocysteine + H(+). Functionally, mitochondrial tRNA N(1)-methyltransferase involved in mitochondrial tRNA maturation. Component of mitochondrial ribonuclease P, a complex composed of TRMT10C/MRPP1, HSD17B10/MRPP2 and PRORP/MRPP3, which cleaves tRNA molecules in their 5'-ends. Together with HSD17B10/MRPP2, forms a subcomplex of the mitochondrial ribonuclease P, named MRPP1-MRPP2 subcomplex, which displays functions that are independent of the ribonuclease P activity. The MRPP1-MRPP2 subcomplex catalyzes the formation of N(1)-methylguanine and N(1)-methyladenine at position 9 (m1G9 and m1A9, respectively) in tRNAs; TRMT10C/MRPP1 acting as the catalytic N(1)-methyltransferase subunit. The MRPP1-MRPP2 subcomplex also acts as a tRNA maturation platform: following 5'-end cleavage by the mitochondrial ribonuclease P complex, the MRPP1-MRPP2 subcomplex enhances the efficiency of 3'-processing catalyzed by ELAC2, retains the tRNA product after ELAC2 processing and presents the nascent tRNA to the mitochondrial CCA tRNA nucleotidyltransferase TRNT1 enzyme. In addition to tRNA N(1)-methyltransferase activity, TRMT10C/MRPP1 also acts as a mRNA N(1)-methyltransferase by mediating methylation of adenosine residues at the N(1) position of MT-ND5 mRNA. Associates with mitochondrial DNA complexes at the nucleoids to initiate RNA processing and ribosome assembly. The chain is tRNA methyltransferase 10 homolog C from Rattus norvegicus (Rat).